The primary structure comprises 684 residues: Threonine--tRNA ligase (684 aa).

The TGS domain occupies 1–66 (MTVPATDSCP…DTDAEVVPVA (66 aa)). Positions 261-567 (DHRKLGSELD…LTEHYAGAFP (307 aa)) are catalytic. Cysteine 366, histidine 417, and histidine 544 together coordinate Zn(2+).

This sequence belongs to the class-II aminoacyl-tRNA synthetase family. Homodimer. Zn(2+) serves as cofactor.

Its subcellular location is the cytoplasm. It carries out the reaction tRNA(Thr) + L-threonine + ATP = L-threonyl-tRNA(Thr) + AMP + diphosphate + H(+). Functionally, catalyzes the attachment of threonine to tRNA(Thr) in a two-step reaction: L-threonine is first activated by ATP to form Thr-AMP and then transferred to the acceptor end of tRNA(Thr). Also edits incorrectly charged L-seryl-tRNA(Thr). In Mycolicibacterium paratuberculosis (strain ATCC BAA-968 / K-10) (Mycobacterium paratuberculosis), this protein is Threonine--tRNA ligase.